Reading from the N-terminus, the 203-residue chain is A-type ATP synthase subunit E (203 aa).

This sequence belongs to the V-ATPase E subunit family. In terms of assembly, has multiple subunits with at least A(3), B(3), C, D, E, F, H, I and proteolipid K(x).

It localises to the cell membrane. In terms of biological role, component of the A-type ATP synthase that produces ATP from ADP in the presence of a proton gradient across the membrane. The protein is A-type ATP synthase subunit E of Methanococcus aeolicus (strain ATCC BAA-1280 / DSM 17508 / OCM 812 / Nankai-3).